A 105-amino-acid chain; its full sequence is UPF0235 protein RF_1332 (105 aa).

Belongs to the UPF0235 family.

The polypeptide is UPF0235 protein RF_1332 (Rickettsia felis (strain ATCC VR-1525 / URRWXCal2) (Rickettsia azadi)).